The primary structure comprises 272 residues: MLEQPIGVIDSGVGGLTVAKEIMRQLPKENIIYVGDTKRCPYGPRPEEEVLQYTWEMTDYLLENHHIKMLVIACNTATAIALEDIQRKTDIPVVGVIQPGARTAIKVTKNQHIGVIGTVNTIKSRAYEQALLGLNAELQVENTACPLLVPFVESGRFLQESAEEAVEASLEPLKGTSIDTLILGCTHYPILKDPIQNYMGEHVKIISSGDETAREVSTILSYKGLLNQSKHAPEHQFLTTGERNGFAKIAEDWFGHEIGHVECISLQEPVRK.

Residues Asp10–Ser11 and Tyr42–Gly43 each bind substrate. Catalysis depends on Cys74, which acts as the Proton donor/acceptor. Residue Asn75–Thr76 coordinates substrate. Catalysis depends on Cys185, which acts as the Proton donor/acceptor. Thr186 to His187 provides a ligand contact to substrate.

The protein belongs to the aspartate/glutamate racemases family.

It carries out the reaction L-glutamate = D-glutamate. It participates in cell wall biogenesis; peptidoglycan biosynthesis. Provides the (R)-glutamate required for cell wall biosynthesis. This chain is Glutamate racemase, found in Bacillus velezensis (strain DSM 23117 / BGSC 10A6 / LMG 26770 / FZB42) (Bacillus amyloliquefaciens subsp. plantarum).